Here is a 429-residue protein sequence, read N- to C-terminus: Alpha-L-rhamnosidase rgxB (429 aa).

The signal sequence occupies residues 1–20 (MAPIALKILLFTSLIVPSIS). N-linked (GlcNAc...) asparagine glycans are attached at residues asparagine 67, asparagine 77, asparagine 97, asparagine 103, asparagine 112, asparagine 135, and asparagine 219. One copy of the PbH1 1 repeat lies at 217–238 (SKNITLTNWEVVNGDDSISTKA). Catalysis depends on aspartate 231, which acts as the Proton donor. Asparagine 239, asparagine 247, asparagine 278, and asparagine 344 each carry an N-linked (GlcNAc...) asparagine glycan. PbH1 repeat units lie at residues 240 to 260 (STDI…AIGS) and 271 to 292 (VERL…YFKT). A disulfide bridge connects residues cysteine 374 and cysteine 380. Residues asparagine 387, asparagine 395, and asparagine 414 are each glycosylated (N-linked (GlcNAc...) asparagine).

It belongs to the glycosyl hydrolase 28 family.

Its subcellular location is the secreted. It carries out the reaction Hydrolysis of terminal non-reducing alpha-L-rhamnose residues in alpha-L-rhamnosides.. In terms of biological role, alpha-L-rhamnosidase which is able to degrade p-nitrophenyl-alpha-L-rhamnopyranoside (pnp_Rha). The natural substrate of this enzyme has not been identified yet. This Aspergillus niger (strain ATCC MYA-4892 / CBS 513.88 / FGSC A1513) protein is Alpha-L-rhamnosidase rgxB (rgxB).